Consider the following 296-residue polypeptide: Ceramide synthase LOH2 (296 aa).

6 consecutive transmembrane segments (helical) span residues V19–L39, L80–A100, L121–E141, I158–A178, F206–I226, and M254–V274. The TLC domain occupies V71–K278. Phosphoserine is present on residues S289 and S291.

As to expression, expressed ubiquitously with highest levels in pollen.

It localises to the endoplasmic reticulum membrane. The catalysed reaction is a sphingoid base + hexadecanoyl-CoA = an N-hexadecanoyl-sphingoid base + CoA + H(+). It catalyses the reaction sphinganine + hexadecanoyl-CoA = N-hexadecanoylsphinganine + CoA + H(+). The enzyme catalyses sphing-4-enine + hexadecanoyl-CoA = N-hexadecanoylsphing-4-enine + CoA + H(+). It carries out the reaction sphinga-(4E,8E)-dienine + hexadecanoyl-CoA = N-hexadecanoylsphinga-(4E,8E)-dienine + CoA + H(+). The catalysed reaction is sphinga-(4E,8Z)-dienine + hexadecanoyl-CoA = N-hexadecanoylsphinga-(4E,8Z)-dienine + CoA + H(+). Its pathway is sphingolipid metabolism. With respect to regulation, inhibited by the mycotoxin fumonisin B(1), a sphingosine analog mycotoxins produced by pathogenic fungi. Activated by divalent cation such as magnesium Mg(2+), zinc Zn(2+), manganese Mn(2+) and calcium Ca(2+). Its function is as follows. Prevents cell division in root meristems and promotes salicylic acid (SA) production and hypersensitive response (HR). Catalyzes the biosynthesis of ceramide sphingolipids with C(16) fatty acids, structural membrane lipids involved in membrane trafficking (e.g. early endosomes) and cell polarity (e.g. polar auxin transport related proteins); accepts only C16:0 fatty acids, but with a wide range of d18 sphingoid bases, such as sphinganine (d18:0) and palmitoyl-CoA. Mediates resistance to sphinganine-analog mycotoxins (SAMs, e.g. fumonisin B(1)) by restoring the sphingolipid biosynthesis. Could salvage the transport of GPI-anchored proteins from the endoplasmic reticulum to the Golgi apparatus in ceramides-depleted cells after SAM exposure. Contributes to hypoxic conditions tolerance (e.g. submergences), especially in the dark, by promoting the formation of very-long-chain (VLC) ceramide species (22:1, 24:1 and 26:1) and of VLC unsaturated ceramides, which are modulating CTR1-mediated ethylene signaling leading to endoplasmic reticulum (ER)-to-nucleus translocation of EIN2 and EIN3. This Arabidopsis thaliana (Mouse-ear cress) protein is Ceramide synthase LOH2.